The sequence spans 161 residues: Globin CTT-IX (161 aa).

Residues Met1–Ala16 form the signal peptide. In terms of domain architecture, Globin spans Pro18–Leu161. His76 and His111 together coordinate heme b.

The protein belongs to the globin family. As to quaternary structure, homodimer.

This Chironomus thummi thummi (Midge) protein is Globin CTT-IX (CTT-9).